The sequence spans 592 residues: Cytosolic purine 5'-nucleotidase (592 aa).

A compositionally biased stretch (low complexity) spans 1-15 (MAENNNNNNNNNNNN). The interval 1–37 (MAENNNNNNNNNNNNVSTPPHQKPHLTTGLRTSSSGL) is disordered. Catalysis depends on aspartate 122, which acts as the Nucleophile. IMP is bound by residues aspartate 122 and aspartate 124. Mg(2+) is bound by residues aspartate 122 and aspartate 124. Aspartate 124 functions as the Proton donor in the catalytic mechanism. Position 226 (asparagine 226) interacts with ATP. The disordered stretch occupies residues 252 to 273 (LTEEVADEQQQMNSPPLSSLGS). Residues 259–273 (EQQQMNSPPLSSLGS) show a composition bias toward polar residues. IMP is bound by residues arginine 299, aspartate 303, lysine 312, threonine 347, asparagine 348, serine 349, and lysine 385. Position 444 (aspartate 444) interacts with Mg(2+). Residues glutamine 547 and arginine 550 each coordinate ATP.

Belongs to the 5'(3')-deoxyribonucleotidase family. As to quaternary structure, homotetramer. Requires Mg(2+) as cofactor.

It localises to the cytoplasm. Its subcellular location is the cytosol. The enzyme catalyses a ribonucleoside 5'-phosphate + H2O = a ribonucleoside + phosphate. The catalysed reaction is a 2'-deoxyribonucleoside + a ribonucleoside 5'-phosphate = a ribonucleoside + a 2'-deoxyribonucleoside 5'-phosphate. Its function is as follows. Broad specificity cytosolic 5'-nucleotidase that catalyzes the dephosphorylation of 6-hydroxypurine nucleoside 5'-monophosphates. In addition, possesses a phosphotransferase activity by which it can transfer a phosphate from a donor nucleoside monophosphate to an acceptor nucleoside. Through these activities regulates the purine nucleoside/nucleotide pools within the cell. In Dictyostelium discoideum (Social amoeba), this protein is Cytosolic purine 5'-nucleotidase (nt5c2).